The primary structure comprises 538 residues: ATP synthase subunit alpha, mitochondrial (538 aa).

197–204 is an ATP binding site; the sequence is GDRQTGKT. The interval 228-248 is essential and sufficient for enterobactin binding; it reads FCIYVAVGQKRSTVAQIVKRL.

Belongs to the ATPase alpha/beta chains family. As to quaternary structure, subunit of the F-type ATPase which has 2 components, CF(1) - the catalytic core - and CF(0) - the membrane proton channel. Ubiquitous (at protein level).

The protein localises to the mitochondrion. Its subcellular location is the mitochondrion inner membrane. Mitochondrial membrane ATP synthase (F(1)F(0) ATP synthase or Complex V) produces ATP from ADP in the presence of a proton gradient across the membrane which is generated by electron transport complexes of the respiratory chain. F-type ATPases consist of two structural domains, F(1) - containing the extramembraneous catalytic core, and F(0) - containing the membrane proton channel, linked together by a central stalk and a peripheral stalk. During catalysis, ATP synthesis in the catalytic domain of F(1) is coupled via a rotary mechanism of the central stalk subunits to proton translocation. Subunits alpha and beta form the catalytic core in F(1). Rotation of the central stalk against the surrounding subunits leads to hydrolysis of ATP in three separate catalytic sites on the beta subunits. Subunit alpha does not bear the catalytic high-affinity ATP-binding sites. Binds the bacterial siderophore enterobactin and is required for the assimilation of enterobactin-bound iron from non-pathogenic bacteria. Promotes mitochondrial accumulation of enterobactin-derived iron ions. The sequence is that of ATP synthase subunit alpha, mitochondrial from Caenorhabditis elegans.